We begin with the raw amino-acid sequence, 214 residues long: Leucyl/phenylalanyl-tRNA--protein transferase (214 aa).

This sequence belongs to the L/F-transferase family.

Its subcellular location is the cytoplasm. The catalysed reaction is N-terminal L-lysyl-[protein] + L-leucyl-tRNA(Leu) = N-terminal L-leucyl-L-lysyl-[protein] + tRNA(Leu) + H(+). The enzyme catalyses N-terminal L-arginyl-[protein] + L-leucyl-tRNA(Leu) = N-terminal L-leucyl-L-arginyl-[protein] + tRNA(Leu) + H(+). It carries out the reaction L-phenylalanyl-tRNA(Phe) + an N-terminal L-alpha-aminoacyl-[protein] = an N-terminal L-phenylalanyl-L-alpha-aminoacyl-[protein] + tRNA(Phe). Functions in the N-end rule pathway of protein degradation where it conjugates Leu, Phe and, less efficiently, Met from aminoacyl-tRNAs to the N-termini of proteins containing an N-terminal arginine or lysine. The polypeptide is Leucyl/phenylalanyl-tRNA--protein transferase (Cereibacter sphaeroides (strain KD131 / KCTC 12085) (Rhodobacter sphaeroides)).